The primary structure comprises 173 residues: Shikimate kinase 1 (173 aa).

14–19 (GAGKST) is a binding site for ATP. Ser18 provides a ligand contact to Mg(2+). 3 residues coordinate substrate: Asp36, Arg60, and Gly82. Arg120 provides a ligand contact to ATP. Arg140 contributes to the substrate binding site. Gln157 is an ATP binding site.

This sequence belongs to the shikimate kinase family. In terms of assembly, monomer. Requires Mg(2+) as cofactor.

Its subcellular location is the cytoplasm. The enzyme catalyses shikimate + ATP = 3-phosphoshikimate + ADP + H(+). It functions in the pathway metabolic intermediate biosynthesis; chorismate biosynthesis; chorismate from D-erythrose 4-phosphate and phosphoenolpyruvate: step 5/7. In terms of biological role, catalyzes the specific phosphorylation of the 3-hydroxyl group of shikimic acid using ATP as a cosubstrate. In Yersinia pseudotuberculosis serotype O:1b (strain IP 31758), this protein is Shikimate kinase 1.